Reading from the N-terminus, the 579-residue chain is Vitamin B6 transporter TPN1 (579 aa).

12 helical membrane-spanning segments follow: residues 99 to 119 (TGGL…GLSF), 123 to 143 (LASS…CSIM), 158 to 178 (LFGW…VMGW), 199 to 219 (PLWV…IFGI), 222 to 242 (VIKV…LLYI), 275 to 295 (LCYS…ILFP), 303 to 323 (IFCL…ILGL), 363 to 383 (VVVL…SAAF), 395 to 415 (IPRW…ALIG), 422 to 442 (ILGN…ILLF), 520 to 540 (FAFI…YWIG), and 546 to 566 (FGEY…GVVY).

It belongs to the purine-cytosine permease (2.A.39) family.

The protein localises to the membrane. Its function is as follows. Thiamine-regulated, high affinity import carrier of pyridoxine, pyridoxal and pyridoxamine. This chain is Vitamin B6 transporter TPN1 (TPN1), found in Saccharomyces cerevisiae (Baker's yeast).